Reading from the N-terminus, the 339-residue chain is DNA-directed RNA polymerase subunit alpha (339 aa).

Residues 1–235 (MTIQKNWQEL…DQLNVFVNFE (235 aa)) are alpha N-terminal domain (alpha-NTD). The segment at 251-339 (FNPAFLKKVD…ELAKRFEDHY (89 aa)) is alpha C-terminal domain (alpha-CTD).

Belongs to the RNA polymerase alpha chain family. Homodimer. The RNAP catalytic core consists of 2 alpha, 1 beta, 1 beta' and 1 omega subunit. When a sigma factor is associated with the core the holoenzyme is formed, which can initiate transcription.

It carries out the reaction RNA(n) + a ribonucleoside 5'-triphosphate = RNA(n+1) + diphosphate. Functionally, DNA-dependent RNA polymerase catalyzes the transcription of DNA into RNA using the four ribonucleoside triphosphates as substrates. The protein is DNA-directed RNA polymerase subunit alpha of Rhodopseudomonas palustris (strain BisA53).